The primary structure comprises 506 residues: UPF0371 protein FN1121 (506 aa).

It belongs to the UPF0371 family.

This is UPF0371 protein FN1121 from Fusobacterium nucleatum subsp. nucleatum (strain ATCC 25586 / DSM 15643 / BCRC 10681 / CIP 101130 / JCM 8532 / KCTC 2640 / LMG 13131 / VPI 4355).